The primary structure comprises 288 residues: Homoserine kinase (288 aa).

79–89 lines the ATP pocket; sequence PPARGLGSSSA.

The protein belongs to the GHMP kinase family. Homoserine kinase subfamily.

The protein localises to the cytoplasm. It catalyses the reaction L-homoserine + ATP = O-phospho-L-homoserine + ADP + H(+). It functions in the pathway amino-acid biosynthesis; L-threonine biosynthesis; L-threonine from L-aspartate: step 4/5. Its function is as follows. Catalyzes the ATP-dependent phosphorylation of L-homoserine to L-homoserine phosphate. In Listeria innocua serovar 6a (strain ATCC BAA-680 / CLIP 11262), this protein is Homoserine kinase.